The chain runs to 479 residues: MESGSEEPDEQLLLLSEPALHAGPPAGRAAPGGAVRLRGEPGLEEEEEGEEDSGPEGDGEEEPLLRASGRGRRAGAARDKEPRVGAGHTGHAIDMNTFLDDPEFAEIITRAEQVIECGVLPERISQGSSGSYFVKDCKGKTIGVFKPKSEEPYGHLNPKWTKYFHKICCPCCFGRGCLVPNQGYLSEAGAYLVDDKLGLGVVPKTKVVWLVSETFNYSAIDRAKSRGKKYALEKVPKVAKKFNRIGLPPKVGSFQLFVEGYKEADYWLRKFETDPLPENTRKEFQSQFERLVILDYVIRNTDRGNDNWLVRYEKQDDGLNLSDKDIQWTVTEESTIKIAAIDNGLAFPFKHPDEWRAYPFHWAWLSQAQVPFSQETRDLVLPRISDMNFVQDLCEDLHELFKTDKGFDKATFENQMSVMRGQILNLTQALKDGKSPIQLVQMPRVIVERSSTGSQGRIVHLSNAFTQTFHSRKPFFSSW.

The segment covering 1-10 has biased composition (acidic residues); that stretch reads MESGSEEPDE. A disordered region spans residues 1–91; sequence MESGSEEPDE…PRVGAGHTGH (91 aa). Residues 18–34 show a composition bias toward low complexity; that stretch reads PALHAGPPAGRAAPGGA. The segment covering 42–62 has biased composition (acidic residues); it reads GLEEEEEGEEDSGPEGDGEEE. One can recognise a PI3K/PI4K catalytic domain in the interval 118 to 449; that stretch reads GVLPERISQG…VQMPRVIVER (332 aa). Positions 124–130 are G-loop; that stretch reads ISQGSSG. ATP-binding residues include Ser-131 and Lys-146. The important for substrate binding stretch occupies residues 151-153; the sequence is EPY. An important for interaction with membranes region spans residues 159–172; it reads KWTKYFHKICCPCC. ATP contacts are provided by residues 255 to 258 and 269 to 270; these read QLFV and RK. The important for interaction with membranes stretch occupies residues 262–270; the sequence is KEADYWLRK. Positions 299–307 are catalytic loop; the sequence is RNTDRGNDN. The activation loop stretch occupies residues 340–360; sequence AIDNGLAFPFKHPDEWRAYPF. Asp-342 contacts ATP. The segment at 355–364 is important for interaction with membranes; it reads WRAYPFHWAW.

It belongs to the PI3/PI4-kinase family. Type II PI4K subfamily.

The protein localises to the cytoplasm. Its subcellular location is the cytosol. The protein resides in the golgi apparatus membrane. It localises to the endoplasmic reticulum membrane. It is found in the cell membrane. The protein localises to the early endosome membrane. It catalyses the reaction a 1,2-diacyl-sn-glycero-3-phospho-(1D-myo-inositol) + ATP = a 1,2-diacyl-sn-glycero-3-phospho-(1D-myo-inositol 4-phosphate) + ADP + H(+). In terms of biological role, contributes to the overall PI4-kinase activity of the cell. This contribution may be especially significant in plasma membrane, endosomal and Golgi compartments. The phosphorylation of phosphatidylinositol (PI) to PI4P is the first committed step in the generation of phosphatidylinositol 4,5-bisphosphate (PIP2), a precursor of the second messenger inositol 1,4,5-trisphosphate (InsP3). In Gallus gallus (Chicken), this protein is Phosphatidylinositol 4-kinase type 2-beta (PI4K2B).